A 353-amino-acid polypeptide reads, in one-letter code: Photosystem II D2 protein (353 aa).

Threonine 2 bears the N-acetylthreonine mark. Threonine 2 is modified (phosphothreonine). Residues 41-61 (CAYFALGGWFTGTTFVTSWYT) traverse the membrane as a helical segment. Residue histidine 118 coordinates chlorophyll a. A helical membrane pass occupies residues 125 to 141 (GFMLRQFELARSVQLRP). 2 residues coordinate pheophytin a: glutamine 130 and asparagine 143. The chain crosses the membrane as a helical span at residues 153–166 (VFVSVFLIYPLGQS). Residue histidine 198 coordinates chlorophyll a. A helical membrane pass occupies residues 208 to 228 (AALLCAIHGATVENTLFEDGD). A plastoquinone contacts are provided by histidine 215 and phenylalanine 262. Histidine 215 provides a ligand contact to Fe cation. Histidine 269 is a Fe cation binding site. Residues 279–295 (GLWMSAIGVVGLALNLR) form a helical membrane-spanning segment.

It belongs to the reaction center PufL/M/PsbA/D family. PSII is composed of 1 copy each of membrane proteins PsbA, PsbB, PsbC, PsbD, PsbE, PsbF, PsbH, PsbI, PsbJ, PsbK, PsbL, PsbM, PsbT, PsbX, PsbY, PsbZ, Psb30/Ycf12, at least 3 peripheral proteins of the oxygen-evolving complex and a large number of cofactors. It forms dimeric complexes. The D1/D2 heterodimer binds P680, chlorophylls that are the primary electron donor of PSII, and subsequent electron acceptors. It shares a non-heme iron and each subunit binds pheophytin, quinone, additional chlorophylls, carotenoids and lipids. There is also a Cl(-1) ion associated with D1 and D2, which is required for oxygen evolution. The PSII complex binds additional chlorophylls, carotenoids and specific lipids. serves as cofactor. Post-translationally, phosphorylated on threonine residue(s); phosphorylation increases with increasing light levels.

It is found in the plastid. It localises to the chloroplast thylakoid membrane. It carries out the reaction 2 a plastoquinone + 4 hnu + 2 H2O = 2 a plastoquinol + O2. Functionally, photosystem II (PSII) is a light-driven water:plastoquinone oxidoreductase that uses light energy to abstract electrons from H(2)O, generating O(2) and a proton gradient subsequently used for ATP formation. It consists of a core antenna complex that captures photons, and an electron transfer chain that converts photonic excitation into a charge separation. The D1/D2 (PsbA/PsbD) reaction center heterodimer binds P680, the primary electron donor of PSII as well as several subsequent electron acceptors. D2 is needed for assembly of a stable PSII complex. In Marchantia polymorpha (Common liverwort), this protein is Photosystem II D2 protein.